The chain runs to 359 residues: L-seryl-tRNA(Sec) kinase (359 aa).

25 to 32 (GLPAAGKS) is a binding site for ATP.

The protein belongs to the L-seryl-tRNA(Sec) kinase family. Mg(2+) is required as a cofactor.

It catalyses the reaction L-seryl-tRNA(Sec) + ATP = O-phospho-L-seryl-tRNA(Sec) + ADP. It participates in aminoacyl-tRNA biosynthesis; selenocysteinyl-tRNA(Sec) biosynthesis; selenocysteinyl-tRNA(Sec) from L-seryl-tRNA(Sec) (archaeal/eukaryal route): step 1/2. Its function is as follows. Specifically phosphorylates seryl-tRNA(Sec) to O-phosphoseryl-tRNA(Sec), an activated intermediate for selenocysteine biosynthesis. No activity with other tRNAs has been detected. The polypeptide is L-seryl-tRNA(Sec) kinase (Pstk) (Mus musculus (Mouse)).